The sequence spans 171 residues: ATP synthase subunit b (171 aa).

The helical transmembrane segment at 13–33 (GVEWGTTFVTLVTFVILIILL) threads the bilayer.

This sequence belongs to the ATPase B chain family. As to quaternary structure, F-type ATPases have 2 components, F(1) - the catalytic core - and F(0) - the membrane proton channel. F(1) has five subunits: alpha(3), beta(3), gamma(1), delta(1), epsilon(1). F(0) has three main subunits: a(1), b(2) and c(10-14). The alpha and beta chains form an alternating ring which encloses part of the gamma chain. F(1) is attached to F(0) by a central stalk formed by the gamma and epsilon chains, while a peripheral stalk is formed by the delta and b chains.

Its subcellular location is the cell membrane. F(1)F(0) ATP synthase produces ATP from ADP in the presence of a proton or sodium gradient. F-type ATPases consist of two structural domains, F(1) containing the extramembraneous catalytic core and F(0) containing the membrane proton channel, linked together by a central stalk and a peripheral stalk. During catalysis, ATP synthesis in the catalytic domain of F(1) is coupled via a rotary mechanism of the central stalk subunits to proton translocation. Functionally, component of the F(0) channel, it forms part of the peripheral stalk, linking F(1) to F(0). This Staphylococcus epidermidis (strain ATCC 12228 / FDA PCI 1200) protein is ATP synthase subunit b.